A 142-amino-acid chain; its full sequence is Small ribosomal subunit protein uS19 (142 aa).

The protein belongs to the universal ribosomal protein uS19 family. In terms of assembly, component of the small ribosomal subunit. Mature ribosomes consist of a small (40S) and a large (60S) subunit. The 40S subunit contains about 32 different proteins and 1 molecule of RNA (18S). The 60S subunit contains 45 different proteins and 3 molecules of RNA (25S, 5.8S and 5S).

It localises to the cytoplasm. Functionally, component of the ribosome, a large ribonucleoprotein complex responsible for the synthesis of proteins in the cell. The small ribosomal subunit (SSU) binds messenger RNAs (mRNAs) and translates the encoded message by selecting cognate aminoacyl-transfer RNA (tRNA) molecules. The large subunit (LSU) contains the ribosomal catalytic site termed the peptidyl transferase center (PTC), which catalyzes the formation of peptide bonds, thereby polymerizing the amino acids delivered by tRNAs into a polypeptide chain. The nascent polypeptides leave the ribosome through a tunnel in the LSU and interact with protein factors that function in enzymatic processing, targeting, and the membrane insertion of nascent chains at the exit of the ribosomal tunnel. RPS15 has a role in the late stage of the assembly of pre-40S particles within the nucleus and controls their export to the cytoplasm. This Candida albicans (strain SC5314 / ATCC MYA-2876) (Yeast) protein is Small ribosomal subunit protein uS19 (RPS15).